The primary structure comprises 159 residues: SsrA-binding protein (159 aa).

This sequence belongs to the SmpB family.

The protein resides in the cytoplasm. Required for rescue of stalled ribosomes mediated by trans-translation. Binds to transfer-messenger RNA (tmRNA), required for stable association of tmRNA with ribosomes. tmRNA and SmpB together mimic tRNA shape, replacing the anticodon stem-loop with SmpB. tmRNA is encoded by the ssrA gene; the 2 termini fold to resemble tRNA(Ala) and it encodes a 'tag peptide', a short internal open reading frame. During trans-translation Ala-aminoacylated tmRNA acts like a tRNA, entering the A-site of stalled ribosomes, displacing the stalled mRNA. The ribosome then switches to translate the ORF on the tmRNA; the nascent peptide is terminated with the 'tag peptide' encoded by the tmRNA and targeted for degradation. The ribosome is freed to recommence translation, which seems to be the essential function of trans-translation. The sequence is that of SsrA-binding protein from Acidiphilium cryptum (strain JF-5).